Reading from the N-terminus, the 388-residue chain is MSYQPTPEDRFTFGLWTVGWQGRDPFGDATRRALDPVETVQRLAELGAHGVTFHDDDLIPFGSSDTERESHIKRFRQALDATGMTVPMATTNLFTHPVFKDGAFTANDRDVRRYALRKTIRNIDLAAELGAKTYVAWGGREGAESGAAKDVRSALDRMKEAFDLLGEYVTSQGYVLRFAIEPKPNEPRGDILLPTVGHALAFIERLERPELYGVNPEVGHEQMAGLNFPHGIAQALWAGKLFHIDLNGQSGIKYDQDLRFGAGDLRSALWMVDLLESAGYEGPRHFDFKPPRTEDLDGVWASAAGCMRNYLILKERAAAFRADPEVQEALRASRLDQLAQPTAADGLEDLLADRAAFEDFDVEAAAARGMAFERLDQLAMDHLLGARG.

Active-site residues include histidine 54 and aspartate 57. Residues glutamate 181, glutamate 217, histidine 220, aspartate 245, aspartate 255, aspartate 257, and aspartate 287 each contribute to the Mg(2+) site.

This sequence belongs to the xylose isomerase family. As to quaternary structure, homotetramer. Mg(2+) serves as cofactor.

It localises to the cytoplasm. It catalyses the reaction alpha-D-xylose = alpha-D-xylulofuranose. In Streptomyces olivaceoviridis (Streptomyces corchorusii), this protein is Xylose isomerase.